We begin with the raw amino-acid sequence, 171 residues long: Adenine phosphoribosyltransferase (171 aa).

This sequence belongs to the purine/pyrimidine phosphoribosyltransferase family. In terms of assembly, homodimer.

It is found in the cytoplasm. It catalyses the reaction AMP + diphosphate = 5-phospho-alpha-D-ribose 1-diphosphate + adenine. The protein operates within purine metabolism; AMP biosynthesis via salvage pathway; AMP from adenine: step 1/1. Its function is as follows. Catalyzes a salvage reaction resulting in the formation of AMP, that is energically less costly than de novo synthesis. This chain is Adenine phosphoribosyltransferase, found in Christiangramia forsetii (strain DSM 17595 / CGMCC 1.15422 / KT0803) (Gramella forsetii).